Here is a 508-residue protein sequence, read N- to C-terminus: Beta-glucosidase 10 (508 aa).

A signal peptide spans 1 to 22 (MKLYSLLSVFLVILLATSDSDA). Residues glutamine 42, histidine 142, and 187–188 (NE) contribute to the a beta-D-glucoside site. Glutamate 188 (proton donor) is an active-site residue. The cysteines at positions 207 and 215 are disulfide-linked. Residues asparagine 214 and asparagine 219 are each glycosylated (N-linked (GlcNAc...) asparagine). Tyrosine 331 contributes to the a beta-D-glucoside binding site. N-linked (GlcNAc...) asparagine glycosylation occurs at asparagine 365. Residue glutamate 398 coordinates a beta-D-glucoside. The Nucleophile role is filled by glutamate 398. Asparagine 431 carries an N-linked (GlcNAc...) asparagine glycan. Tryptophan 441 and phenylalanine 457 together coordinate a beta-D-glucoside. N-linked (GlcNAc...) asparagine glycans are attached at residues asparagine 463, asparagine 485, and asparagine 501.

It belongs to the glycosyl hydrolase 1 family.

It carries out the reaction Hydrolysis of terminal, non-reducing beta-D-glucosyl residues with release of beta-D-glucose.. This Arabidopsis thaliana (Mouse-ear cress) protein is Beta-glucosidase 10.